The following is a 393-amino-acid chain: NAD(P)H-quinone oxidoreductase subunit H, chloroplastic (393 aa).

Belongs to the complex I 49 kDa subunit family. NDH is composed of at least 16 different subunits, 5 of which are encoded in the nucleus.

The protein localises to the plastid. It is found in the chloroplast thylakoid membrane. It carries out the reaction a plastoquinone + NADH + (n+1) H(+)(in) = a plastoquinol + NAD(+) + n H(+)(out). It catalyses the reaction a plastoquinone + NADPH + (n+1) H(+)(in) = a plastoquinol + NADP(+) + n H(+)(out). Functionally, NDH shuttles electrons from NAD(P)H:plastoquinone, via FMN and iron-sulfur (Fe-S) centers, to quinones in the photosynthetic chain and possibly in a chloroplast respiratory chain. The immediate electron acceptor for the enzyme in this species is believed to be plastoquinone. Couples the redox reaction to proton translocation, and thus conserves the redox energy in a proton gradient. The protein is NAD(P)H-quinone oxidoreductase subunit H, chloroplastic of Oenothera argillicola (Appalachian evening primrose).